Consider the following 803-residue polypeptide: Zinc finger X-linked protein ZXDB (803 aa).

Disordered regions lie at residues Met-1 to Asp-91, Glu-120 to Thr-140, and Ala-218 to Gly-260. Gly residues predominate over residues Leu-13 to Gly-26. C2H2-type zinc fingers lie at residues Tyr-271–His-295, Phe-304–His-328, Phe-334–His-358, Phe-364–His-386, Tyr-393–His-417, Phe-424–His-448, Phe-454–His-478, Phe-484–His-508, Phe-514–His-538, and Ser-547–His-572. A required for interaction with ZXDC region spans residues Tyr-271–Asp-577. The segment at Gln-576–Val-703 is required for transcriptional activation.

Belongs to the ZXD family. In terms of assembly, self-associates. Interacts with ZXDC and CIITA. As to expression, may be expressed in brain, heart, kidney, liver, lung, muscle and placenta.

It is found in the nucleus. Cooperates with CIITA to promote transcription of MHC class I and MHC class II genes. The polypeptide is Zinc finger X-linked protein ZXDB (ZXDB) (Homo sapiens (Human)).